The chain runs to 199 residues: Alkyl hydroperoxide reductase C (199 aa).

The 162-residue stretch at 2–163 (VLVTYPAPDF…TLRMIDALHF (162 aa)) folds into the Thioredoxin domain. The active-site Cysteine sulfenic acid (-SOH) intermediate is the Cys-50.

This sequence belongs to the peroxiredoxin family. AhpC/Prx1 subfamily. As to quaternary structure, homodimer; disulfide-linked, upon oxidation. 5 homodimers assemble to form a ring-like decamer.

Its subcellular location is the cytoplasm. It carries out the reaction a hydroperoxide + NADH + H(+) = an alcohol + NAD(+) + H2O. Thiol-specific peroxidase that catalyzes the reduction of hydrogen peroxide and organic hydroperoxides to water and alcohols, respectively. Plays a role in cell protection against oxidative stress by detoxifying peroxides. This Buchnera aphidicola subsp. Baizongia pistaciae (strain Bp) protein is Alkyl hydroperoxide reductase C.